The chain runs to 546 residues: Chaperonin GroEL 1 (546 aa).

ATP contacts are provided by residues 30-33 (TLGP), Lys-51, 87-91 (DGTTT), Gly-415, 479-481 (NAA), and Asp-495. Positions 526 to 546 (KEDAPMPGGMPGGMGGMGMDM) are disordered. Positions 534-546 (GMPGGMGGMGMDM) are enriched in gly residues.

The protein belongs to the chaperonin (HSP60) family. In terms of assembly, forms a cylinder of 14 subunits composed of two heptameric rings stacked back-to-back. Interacts with the co-chaperonin GroES.

The protein localises to the cytoplasm. The catalysed reaction is ATP + H2O + a folded polypeptide = ADP + phosphate + an unfolded polypeptide.. Together with its co-chaperonin GroES, plays an essential role in assisting protein folding. The GroEL-GroES system forms a nano-cage that allows encapsulation of the non-native substrate proteins and provides a physical environment optimized to promote and accelerate protein folding. The protein is Chaperonin GroEL 1 of Burkholderia ambifaria (strain ATCC BAA-244 / DSM 16087 / CCUG 44356 / LMG 19182 / AMMD) (Burkholderia cepacia (strain AMMD)).